A 202-amino-acid polypeptide reads, in one-letter code: GTP cyclohydrolase 1 (202 aa).

3 residues coordinate Zn(2+): Cys90, His93, and Cys163.

This sequence belongs to the GTP cyclohydrolase I family. Toroid-shaped homodecamer, composed of two pentamers of five dimers.

It carries out the reaction GTP + H2O = 7,8-dihydroneopterin 3'-triphosphate + formate + H(+). It functions in the pathway cofactor biosynthesis; 7,8-dihydroneopterin triphosphate biosynthesis; 7,8-dihydroneopterin triphosphate from GTP: step 1/1. The sequence is that of GTP cyclohydrolase 1 from Mycolicibacterium vanbaalenii (strain DSM 7251 / JCM 13017 / BCRC 16820 / KCTC 9966 / NRRL B-24157 / PYR-1) (Mycobacterium vanbaalenii).